The chain runs to 437 residues: Peptidyl-prolyl cis-trans isomerase CYP38, chloroplastic (437 aa).

The transit peptide at 1-36 directs the protein to the chloroplast; the sequence is MAAAFASLPTFSVVNSSRFPRRRIGFSCSKKPLEVR. A thylakoid-targeting transit peptide spans 37–92; that stretch reads CSSGNTRYTKQRGAFTSLKECAISLALSVGLMVSVPSIALPPNAHAVANPVIPDVS. The 193-residue stretch at 245 to 437 folds into the PPIase cyclophilin-type domain; it reads VKIKDNPNIE…LANPSYKIAG (193 aa).

Ubiquitous. Lower levels of expression in roots.

The protein localises to the plastid. It localises to the chloroplast thylakoid lumen. It catalyses the reaction [protein]-peptidylproline (omega=180) = [protein]-peptidylproline (omega=0). Functionally, required for the assembly and stabilization of PSII, but has no PPIases activity. The protein is Peptidyl-prolyl cis-trans isomerase CYP38, chloroplastic (CYP38) of Arabidopsis thaliana (Mouse-ear cress).